The following is a 615-amino-acid chain: DNA mismatch repair protein MutL (615 aa).

The tract at residues 363–397 (FAEPAAREPVAPRYTPAPASGSRPAAPWPNAQPGY) is disordered. Positions 364-391 (AEPAAREPVAPRYTPAPASGSRPAAPWP) are enriched in low complexity.

It belongs to the DNA mismatch repair MutL/HexB family.

Functionally, this protein is involved in the repair of mismatches in DNA. It is required for dam-dependent methyl-directed DNA mismatch repair. May act as a 'molecular matchmaker', a protein that promotes the formation of a stable complex between two or more DNA-binding proteins in an ATP-dependent manner without itself being part of a final effector complex. In Escherichia coli O8 (strain IAI1), this protein is DNA mismatch repair protein MutL.